The chain runs to 368 residues: MSASSRGAALLRSQQRSICLQCRNQTRVLAPAGVTSAPRRFYSAEASATATATATATTTTTLPPPHPPVTTSTGTHAATSTSSQIYRIKSGVILTRPPLLTRDLTPFEESFYFYQKRLNERLTAPFRKDFYFKKDTAADLDWRIKLKERHGVPAKDIGRYNPRGRMAWNDEVLVGSQTSSRKHMVEKLLADAEMRVSEDGEEIPAEDRVPVEKPMPRRTEADEKGDVKRLDRALDKTLYLVVKKKADKEGEEAKWMFPTGVVPTDEGLHETAARILAESAGVNMNTWIVGRVPVAHHVVRPVFGQKDGALLKKGEKIFFLKGRIMAGQADLTDNLHDLVDFKWLTQEELRSTLAEEYFHSVKGMFAER.

The disordered stretch occupies residues 53–81; the sequence is TATATTTTTLPPPHPPVTTSTGTHAATST. Low complexity predominate over residues 69–81; the sequence is VTTSTGTHAATST.

The protein belongs to the mitochondrion-specific ribosomal protein mL46 family. Component of the mitochondrial large ribosomal subunit (mt-LSU). Mature N.crassa 74S mitochondrial ribosomes consist of a small (37S) and a large (54S) subunit. The 37S small subunit contains a 16S ribosomal RNA (16S mt-rRNA) and 32 different proteins. The 54S large subunit contains a 23S rRNA (23S mt-rRNA) and 42 different proteins.

The protein resides in the mitochondrion. Functionally, component of the mitochondrial ribosome (mitoribosome), a dedicated translation machinery responsible for the synthesis of mitochondrial genome-encoded proteins, including at least some of the essential transmembrane subunits of the mitochondrial respiratory chain. The mitoribosomes are attached to the mitochondrial inner membrane and translation products are cotranslationally integrated into the membrane. In Neurospora crassa (strain ATCC 24698 / 74-OR23-1A / CBS 708.71 / DSM 1257 / FGSC 987), this protein is Large ribosomal subunit protein mL46 (mrpl17).